A 369-amino-acid polypeptide reads, in one-letter code: MQFLAWFNMLLLLPCFSTTKTCFPGCHCEVESFGLFDSFSLTKVDCSGIGSHIVPVPIPLDTSYLDLSSNKLETINESMLTGPGYTTLVSLDLSYNNIAKISSTTFSRLRYLESLDLSHNSLEVLPEDCFSSSPLGDIDLSNNKLLDIALDVFASKGQGKPLNVDLSNNMLSKITRNHEKSIPNIQNLNLSGNRLTSVPNLQGIPLRYLNLDGNPLAKIEKGDFKGLKGLIHLSLSGLHDFRELSPYSFKELPALQVLDLSNNPNLRSLTAEVIFGLNSIQELNLSGTGVSSLPKTVLKYLPSLKSITLRKNIQCFKTIKEGQYHRQIGLTKLGLGAEELLWCKTPCPRPVCRCRDKPLQSAPQNLPTP.

Residues 1–19 (MQFLAWFNMLLLLPCFSTT) form the signal peptide. The 41-residue stretch at 20 to 60 (KTCFPGCHCEVESFGLFDSFSLTKVDCSGIGSHIVPVPIPL) folds into the LRRNT domain. 11 LRR repeats span residues 61–81 (DTSYLDLSSNKLETINESMLT), 87–108 (TLVSLDLSYNNIAKISSTTFSR), 111–132 (YLESLDLSHNSLEVLPEDCFSS), 134–155 (PLGDIDLSNNKLLDIALDVFAS), 161–181 (PLNVDLSNNMLSKITRNHEKS), 184–205 (NIQNLNLSGNRLTSVPNLQGIP), 206–226 (LRYLNLDGNPLAKIEKGDFKG), 229–248 (GLIHLSLSGLHDFRELSPYS), 254–276 (ALQVLDLSNNPNLRSLTAEVIFG), 279–300 (SIQELNLSGTGVSSLPKTVLKY), and 303–323 (SLKSITLRKNIQCFKTIKEGQ). The N-linked (GlcNAc...) asparagine glycan is linked to Asn-76. Asn-189 carries N-linked (GlcNAc...) asparagine glycosylation. N-linked (GlcNAc...) asparagine glycosylation occurs at Asn-284.

As to quaternary structure, forms a ternary complex with chordin/CHRD and BMP4. Interacts with FZD4 (via FZ domain); competes with WNT2B for binding to FZD4, inhibiting Wnt signaling and repressing peripheral eye development. Interacts with BMP4; shows stronger interaction with BMP4 than isoform 2. Interacts with DVR1/VG1; the interaction is inhibited by BMP4. Interacts with BMP7. In terms of assembly, interacts with FZD4 (via FZ domain); competes with WNT2B for binding to FZD4, inhibiting Wnt signaling and repressing peripheral eye development. Interacts with BMP4; shows weaker interaction with BMP4 than isoform 1. Interacts with DVR1/VG1; the interaction is inhibited by BMP4. Interacts with BMP7. Post-translationally, N-glycosylated. As to expression, during embryonic development, expressed in the middle primitive streak and Hensen's node. Expressed in the peripheral region of the developing eye. Expressed in the presomitic mesoderm during somitogenesis in a NOTCH-dependent manner.

Its subcellular location is the secreted. Contributes to various developmental events through its interactions with multiple signaling pathways. Dorsalizing factor involved in the induction of Hensen's node by inhibiting bone morphogenetic proteins during gastrulation and by enhancing DVR1/VG1 activity. Wnt signaling inhibitor which competes with WNT2B for binding to Wnt receptor FZD4 and represses WNT2B-dependent development of the peripheral eye. Functionally, shows strong bone morphogenetic protein antagonistic activity. In terms of biological role, shows weak bone morphogenetic protein antagonistic activity. The sequence is that of Tsukushi (TSKU) from Gallus gallus (Chicken).